The following is a 1370-amino-acid chain: Putative surface protein SA2285 (1370 aa).

A signal peptide spans 1-50 (MRDKKGPVNKRVDFLSNKLNKYSIRKFTVGTASILIGSLMYLGTQQEAEA). 3 disordered regions span residues 77 to 116 (NKDT…EDTP), 439 to 472 (KFNP…NPLT), and 495 to 1344 (EYGP…TGLE). 24 stretches are compositionally biased toward basic and acidic residues: residues 96 to 116 (DTIE…EDTP), 450 to 460 (KVTREGQKGEK), 504 to 522 (GHRD…EEVP), 553 to 569 (SIVE…RKFN), 578 to 588 (KVTREGQKGEK), 605 to 618 (SKGE…KDPI), 632 to 650 (GHRD…EEVP), 681 to 697 (SIVE…RKFN), 706 to 716 (KVTREGQKGEK), 733 to 746 (SKGE…KDPI), 760 to 778 (GHRD…EEVP), 809 to 825 (SIVE…RKFN), 834 to 844 (KVTREGQKGEK), 861 to 874 (SKGE…KDPI), 888 to 906 (GHRD…EEVP), 937 to 953 (SIVE…RKFN), 962 to 972 (KVTREGQKGEK), 989 to 1002 (SKGE…KDPI), 1016 to 1034 (GHRD…EEVP), 1065 to 1081 (SIVE…RKFN), 1090 to 1100 (KVTREGQKGEK), 1117 to 1130 (SKGE…KDPV), 1174 to 1185 (KVIEEPVDDVIK), and 1202 to 1221 (FETK…RVKQ). The G5 1 domain occupies 418-500 (SAKNNNRIRK…NELTEYGPET (83 aa)). The 83-residue stretch at 546-628 (YGPVKGDSIV…NELTEYGPET (83 aa)) folds into the G5 2 domain. Residues 674 to 756 (YGPVKGDSIV…NELTEYGPET (83 aa)) enclose the G5 3 domain. Residues 802-884 (YGPVKGDSIV…NELTEYGPET (83 aa)) enclose the G5 4 domain. A G5 5 domain is found at 930-1012 (YGPVKGDSIV…NELTEYGPET (83 aa)). A G5 6 domain is found at 1058-1140 (YGPVKGDSIV…NELTEFGGEK (83 aa)). A G5 7 domain is found at 1186-1268 (HGPKTGTPET…DKIVEFGGEK (83 aa)). Positions 1224-1238 (QPGSKTITTPITVNP) are enriched in polar residues. Residues 1252–1282 (EITKQPVDKIVEFGGEKPKDPKGPENPEKPS) show a composition bias toward basic and acidic residues. An LPXTG sorting signal motif is present at residues 1338-1342 (LPKTG). Position 1341 is a pentaglycyl murein peptidoglycan amidated threonine (Thr-1341). Residues 1342–1370 (GLESTQKGLIFSSIIGIAGLMLLARRRKN) constitute a propeptide, removed by sortase.

The protein resides in the secreted. It is found in the cell wall. This is Putative surface protein SA2285 from Staphylococcus aureus (strain N315).